Reading from the N-terminus, the 254-residue chain is Low affinity immunoglobulin gamma Fc region receptor III-A (254 aa).

The signal sequence occupies residues 1-16 (MWQLLLPTALLLLVSA). Residues 17 to 208 (GMRTEDLPKA…ISSFFPPGYQ (192 aa)) are Extracellular-facing. 2 consecutive Ig-like C2-type domains span residues 24–105 (PKAV…LEVH) and 107–189 (GWLL…VNIT). An intrachain disulfide couples Cys-47 to Cys-89. Asn-56, Asn-63, and Asn-92 each carry an N-linked (GlcNAc...) asparagine glycan. Cys-128 and Cys-172 form a disulfide bridge. 2 N-linked (GlcNAc...) asparagine glycosylation sites follow: Asn-180 and Asn-187. A helical membrane pass occupies residues 209–229 (VSFCLVMVLLFAVDTGLYFSV). Topologically, residues 230–254 (KTNIRSSTRDWKDHKFKWRKDPQDK) are cytoplasmic. Phosphoserine; by PKC is present on Ser-236. Thr-237 carries the post-translational modification Phosphothreonine; by PKC.

As to quaternary structure, forms a heterooligomeric complex with ITAM-containing signaling subunits, either a homodimer of CD247, a homodimer of FCER1G or a heterodimer of CD247 and FCER1G. Interacts (via transmembrane domain) with signaling subunits; this interaction is a prerequisite for receptor complex expression on the cell surface and intracellular signal transduction. Binds the Fc region of antigen-complexed IgG with a preference for IgG1 and IgG3 isotypes. Interacts with CD2; this interaction is involved in NK cell activation and cytotoxicity. Interacts with S100A4; this interaction inhibits PKC-dependent phosphorylation of FCGR3A. In terms of processing, glycosylated. Contains high mannose- and complex-type oligosaccharides. Glycosylation at Asn-180 is mandatory for high affinity binding to the Fc and for discrimination between fucosylated and afucosylated IgG glycoforms. Undergoes rapid ectodomain shedding upon NK cell stimulation. The soluble form is produced by a proteolytic cleavage mediated by ADAM17. Repeated stimulation causes receptor shedding, a mechanism that allows for increased NK cell motility and detachment from opsonized target cells while avoiding activation-induced NK cell apoptosis. Post-translationally, phosphorylated at RSSTR motif by PKC. The relevant physiological PKCs might be PRKCI, PRKCG, PRKCE, PRKCH and PRKCQ. In terms of tissue distribution, expressed in natural killer cells (at protein level). Expressed in a subset of circulating monocytes (at protein level).

The protein localises to the cell membrane. Its subcellular location is the secreted. Its function is as follows. Receptor for the invariable Fc fragment of immunoglobulin gamma (IgG). Optimally activated upon binding of clustered antigen-IgG complexes displayed on cell surfaces, triggers lysis of antibody-coated cells, a process known as antibody-dependent cellular cytotoxicity (ADCC). Does not bind free monomeric IgG, thus avoiding inappropriate effector cell activation in the absence of antigenic trigger. Mediates IgG effector functions on natural killer (NK) cells. Binds antigen-IgG complexes generated upon infection and triggers NK cell-dependent cytokine production and degranulation to limit viral load and propagation. Involved in the generation of memory-like adaptive NK cells capable to produce high amounts of IFNG and to efficiently eliminate virus-infected cells via ADCC. Regulates NK cell survival and proliferation, in particular by preventing NK cell progenitor apoptosis. Fc-binding subunit that associates with CD247 and/or FCER1G adapters to form functional signaling complexes. Following the engagement of antigen-IgG complexes, triggers phosphorylation of immunoreceptor tyrosine-based activation motif (ITAM)-containing adapters with subsequent activation of phosphatidylinositol 3-kinase signaling and sustained elevation of intracellular calcium that ultimately drive NK cell activation. The ITAM-dependent signaling coupled to receptor phosphorylation by PKC mediates robust intracellular calcium flux that leads to production of pro-inflammatory cytokines, whereas in the absence of receptor phosphorylation it mainly activates phosphatidylinositol 3-kinase signaling leading to cell degranulation. Costimulates NK cells and trigger lysis of target cells independently of IgG binding. Mediates the antitumor activities of therapeutic antibodies. Upon ligation on monocytes triggers TNFA-dependent ADCC of IgG-coated tumor cells. Mediates enhanced ADCC in response to afucosylated IgGs. (Microbial infection) Involved in Dengue virus pathogenesis via antibody-dependent enhancement (ADE) mechanism. Secondary infection with Dengue virus triggers elevated levels of afucosylated non-neutralizing IgG1s with reactivity to viral envelope/E protein. Viral antigen-IgG1 complexes bind with high affinity to FCGR3A, facilitating virus entry in myeloid cells and subsequent viral replication. This chain is Low affinity immunoglobulin gamma Fc region receptor III-A, found in Homo sapiens (Human).